The sequence spans 369 residues: S-adenosylmethionine decarboxylase proenzyme 2 (369 aa).

Active-site residues include Glu-9 and Glu-12. The active-site Schiff-base intermediate with substrate; via pyruvic acid is the Ser-69. Ser-69 is modified (pyruvic acid (Ser); by autocatalysis). The Proton donor; for catalytic activity role is filled by Cys-83. Residues Ser-236 and His-249 each act as proton acceptor; for processing activity in the active site.

Belongs to the eukaryotic AdoMetDC family. It depends on pyruvate as a cofactor. Is synthesized initially as an inactive proenzyme. Formation of the active enzyme involves a self-maturation process in which the active site pyruvoyl group is generated from an internal serine residue via an autocatalytic post-translational modification. Two non-identical subunits are generated from the proenzyme in this reaction, and the pyruvate is formed at the N-terminus of the alpha chain, which is derived from the carboxyl end of the proenzyme. The post-translation cleavage follows an unusual pathway, termed non-hydrolytic serinolysis, in which the side chain hydroxyl group of the serine supplies its oxygen atom to form the C-terminus of the beta chain, while the remainder of the serine residue undergoes an oxidative deamination to produce ammonia and the pyruvoyl group blocking the N-terminus of the alpha chain.

The enzyme catalyses S-adenosyl-L-methionine + H(+) = S-adenosyl 3-(methylsulfanyl)propylamine + CO2. It participates in amine and polyamine biosynthesis; S-adenosylmethioninamine biosynthesis; S-adenosylmethioninamine from S-adenosyl-L-methionine: step 1/1. In Brassica juncea (Indian mustard), this protein is S-adenosylmethionine decarboxylase proenzyme 2 (SAMDC2).